Here is a 396-residue protein sequence, read N- to C-terminus: Acetyl-CoA acetyltransferase (396 aa).

The active-site Acyl-thioester intermediate is cysteine 89. Residues 223–225 (RKS) and serine 249 each bind CoA. Residues histidine 352 and cysteine 382 each act as proton acceptor in the active site.

Belongs to the thiolase-like superfamily. Thiolase family.

The protein localises to the cytoplasm. It catalyses the reaction 2 acetyl-CoA = acetoacetyl-CoA + CoA. Its pathway is lipid metabolism; butanoate metabolism. In terms of biological role, involved in syntrophic growth of S.wolfei with butyrate, as part of the butyrate oxidation pathway. Probably catalyzes the beta-keto thiolysis of acetoacetyl-CoA, leading to 2 acetyl-CoA molecules. The sequence is that of Acetyl-CoA acetyltransferase from Syntrophomonas wolfei subsp. wolfei (strain DSM 2245B / Goettingen).